A 311-amino-acid polypeptide reads, in one-letter code: Glycine--tRNA ligase alpha subunit (311 aa).

Belongs to the class-II aminoacyl-tRNA synthetase family. As to quaternary structure, tetramer of two alpha and two beta subunits.

The protein localises to the cytoplasm. The catalysed reaction is tRNA(Gly) + glycine + ATP = glycyl-tRNA(Gly) + AMP + diphosphate. This is Glycine--tRNA ligase alpha subunit from Bradyrhizobium diazoefficiens (strain JCM 10833 / BCRC 13528 / IAM 13628 / NBRC 14792 / USDA 110).